We begin with the raw amino-acid sequence, 95 residues long: uncharacterized protein (95 aa).

This is an uncharacterized protein from Archaeoglobus fulgidus (strain ATCC 49558 / DSM 4304 / JCM 9628 / NBRC 100126 / VC-16).